The primary structure comprises 420 residues: Reticulon-4 receptor-like 2 (420 aa).

Positions Met1–Cys46 are cleaved as a signal peptide. Cystine bridges form between Cys31–Cys37 and Cys35–Cys46. Positions Gln47–Pro60 constitute an LRRNT domain. The N-linked (GlcNAc...) asparagine glycan is linked to Asn50. LRR repeat units follow at residues Ser61–Ser82, Asn83–His104, Ala107–Gly129, Arg132–Gly153, Ser156–Asp177, Asn180–Gly201, Ser204–Gly225, and Arg228–Asp249. N-linked (GlcNAc...) asparagine glycosylation occurs at Asn93. N-linked (GlcNAc...) asparagine glycosylation is present at Asn236. The LRRCT domain maps to Asn261–Pro312. Intrachain disulfides connect Cys265-Cys288 and Cys267-Cys310. Residues Gln308 to Pro399 form a disordered region. The tract at residues Pro315–Ser327 is important for interaction with MAG. Basic and acidic residues predominate over residues Leu351–Gln360. Residue Cys390 is the site of GPI-anchor amidated cysteine attachment. A propeptide spans Gln391–Leu420 (removed in mature form).

The protein belongs to the Nogo receptor family. In terms of assembly, interaction with MAG is controversial, and may be indirect. Does not interact with MAG, OMG and RTN4. Interacts with MAG. In terms of processing, undergoes zinc metalloproteinase-mediated ectodomain shedding in neuroblastoma cells; is released both as a full-length ectodomain and an N-terminal fragment containing the leucine-rich repeat (LRR) region of the protein. Post-translationally, N-glycosylated. As to expression, highly expressed in brain and liver. Expressed at lower levels in kidney, mammary gland, placenta, skeletal muscle, spleen and thyroid.

The protein localises to the cell membrane. The protein resides in the membrane raft. It is found in the cell projection. It localises to the dendrite. Its subcellular location is the perikaryon. The protein localises to the axon. Cell surface receptor that plays a functionally redundant role in the inhibition of neurite outgrowth mediated by MAG. Plays a functionally redundant role in postnatal brain development. Contributes to normal axon migration across the brain midline and normal formation of the corpus callosum. Does not seem to play a significant role in regulating axon regeneration in the adult central nervous system. Protects motoneurons against apoptosis; protection against apoptosis is probably mediated by MAG. Like other family members, plays a role in restricting the number dendritic spines and the number of synapses that are formed during brain development. Signaling mediates activation of Rho and downstream reorganization of the actin cytoskeleton. This Homo sapiens (Human) protein is Reticulon-4 receptor-like 2.